Reading from the N-terminus, the 189-residue chain is Auxin-induced protein IAA4 (189 aa).

Residues Leu8 to Leu12 carry the EAR-like (transcriptional repression) motif. Residues Gly92–Gly179 form the PB1 domain.

It belongs to the Aux/IAA family. As to quaternary structure, homodimers and heterodimers. In terms of processing, phosphorylated by phytochrome A in vitro.

It is found in the nucleus. In terms of biological role, aux/IAA proteins are short-lived transcriptional factors that function as repressors of early auxin response genes at low auxin concentrations. Repression is thought to result from the interaction with auxin response factors (ARFs), proteins that bind to the auxin-responsive promoter element (AuxRE). Formation of heterodimers with ARF proteins may alter their ability to modulate early auxin response genes expression. The protein is Auxin-induced protein IAA4 (IAA4/5) of Pisum sativum (Garden pea).